A 228-amino-acid polypeptide reads, in one-letter code: Large ribosomal subunit protein uL3 (228 aa).

Gln151 carries the post-translational modification N5-methylglutamine.

The protein belongs to the universal ribosomal protein uL3 family. As to quaternary structure, part of the 50S ribosomal subunit. Forms a cluster with proteins L14 and L19. In terms of processing, methylated by PrmB.

One of the primary rRNA binding proteins, it binds directly near the 3'-end of the 23S rRNA, where it nucleates assembly of the 50S subunit. The polypeptide is Large ribosomal subunit protein uL3 (Rhizobium meliloti (strain 1021) (Ensifer meliloti)).